Here is a 106-residue protein sequence, read N- to C-terminus: Nucleoid-associated protein Nwi_0368 (106 aa).

It belongs to the YbaB/EbfC family. In terms of assembly, homodimer.

It localises to the cytoplasm. It is found in the nucleoid. In terms of biological role, binds to DNA and alters its conformation. May be involved in regulation of gene expression, nucleoid organization and DNA protection. The chain is Nucleoid-associated protein Nwi_0368 from Nitrobacter winogradskyi (strain ATCC 25391 / DSM 10237 / CIP 104748 / NCIMB 11846 / Nb-255).